The chain runs to 285 residues: CBY1-interacting BAR domain-containing protein 1-B (285 aa).

The transit peptide at 1–48 directs the protein to the mitochondrion; sequence MSQTPEARTRDNQTRQIQESVNNVEKHFGELCQIFAGYVRKTARLRDK. Residues 11–221 form a BAR-like region; it reads DNQTRQIQES…DIDEEEDLEV (211 aa). The stretch at 142–184 forms a coiled coil; sequence RQIISQAETELQRATMDAARISQQLEETIDNFEKQKIKDIKKL. Over residues 241–261 the composition is skewed to polar residues; it reads NSRSGSTSRAPSVISQPPGNR. A disordered region spans residues 241–285; the sequence is NSRSGSTSRAPSVISQPPGNRQKNRMEDDEDGEDDNDENSTEDEN. Residues 267–285 are compositionally biased toward acidic residues; the sequence is EDDEDGEDDNDENSTEDEN.

This sequence belongs to the CIBAR family.

The protein localises to the cytoplasm. It localises to the cytoskeleton. It is found in the microtubule organizing center. Its subcellular location is the centrosome. The protein resides in the centriole. The protein localises to the cell projection. It localises to the cilium. It is found in the nucleus. Its subcellular location is the mitochondrion inner membrane. The protein resides in the flagellum. In terms of biological role, plays a critical role in regulating mitochondrial ultrastructure and function by maintaining the integrity of mitochondrial morphology, particularly the organization of cristae. Plays a crucial role in ciliogenesis. Plays a key role in the correct positioning of the annulus, a septin-based ring structure in the sperm flagellum, serving both as a physical barrier and a membrane diffusion barrier that separates the midpiece (MP) from the principal piece (PP). The protein is CBY1-interacting BAR domain-containing protein 1-B of Xenopus laevis (African clawed frog).